A 465-amino-acid chain; its full sequence is Glutamate--tRNA ligase (465 aa).

A 'HIGH' region motif is present at residues 11 to 21 (PSPTGYLHIGG). The 'KMSKS' region signature appears at 243-247 (KLSKR). K246 is a binding site for ATP.

Belongs to the class-I aminoacyl-tRNA synthetase family. Glutamate--tRNA ligase type 1 subfamily. Monomer.

The protein resides in the cytoplasm. The catalysed reaction is tRNA(Glu) + L-glutamate + ATP = L-glutamyl-tRNA(Glu) + AMP + diphosphate. Catalyzes the attachment of glutamate to tRNA(Glu) in a two-step reaction: glutamate is first activated by ATP to form Glu-AMP and then transferred to the acceptor end of tRNA(Glu). The sequence is that of Glutamate--tRNA ligase from Aromatoleum aromaticum (strain DSM 19018 / LMG 30748 / EbN1) (Azoarcus sp. (strain EbN1)).